The chain runs to 102 residues: MNKIRKGDRVIVRTGKDKGKQGTVLAVLAEHVTVEGVNVAKKHVRPNPMLGTTGGVVDKIMPIHISNVALVDANGKPSRVGIKVEGGVKTRVLKTTGAAVGA.

It belongs to the universal ribosomal protein uL24 family. In terms of assembly, part of the 50S ribosomal subunit.

Its function is as follows. One of two assembly initiator proteins, it binds directly to the 5'-end of the 23S rRNA, where it nucleates assembly of the 50S subunit. Functionally, one of the proteins that surrounds the polypeptide exit tunnel on the outside of the subunit. The chain is Large ribosomal subunit protein uL24 from Ralstonia pickettii (strain 12J).